The sequence spans 287 residues: Pyridoxal kinase PdxY (287 aa).

Substrate is bound by residues Ser-10 and 45 to 46; that span reads TQ. ATP contacts are provided by residues Asp-112, Ala-144, Glu-149, Lys-182, and 209–212; that span reads RPLV. Substrate is bound at residue Asp-224.

The protein belongs to the pyridoxine kinase family. PdxY subfamily. As to quaternary structure, homodimer. Requires Mg(2+) as cofactor.

The catalysed reaction is pyridoxal + ATP = pyridoxal 5'-phosphate + ADP + H(+). The protein operates within cofactor metabolism; pyridoxal 5'-phosphate salvage; pyridoxal 5'-phosphate from pyridoxal: step 1/1. Pyridoxal kinase involved in the salvage pathway of pyridoxal 5'-phosphate (PLP). Catalyzes the phosphorylation of pyridoxal to PLP. The chain is Pyridoxal kinase PdxY from Shigella sonnei (strain Ss046).